The sequence spans 184 residues: Large ribosomal subunit protein uL15 (184 aa).

The disordered stretch occupies residues Met1 to Glu50. The segment covering Arg21–Asn35 has biased composition (gly residues).

Belongs to the universal ribosomal protein uL15 family. As to quaternary structure, part of the 50S ribosomal subunit.

Its function is as follows. Binds to the 23S rRNA. The polypeptide is Large ribosomal subunit protein uL15 (Chlorobium luteolum (strain DSM 273 / BCRC 81028 / 2530) (Pelodictyon luteolum)).